A 133-amino-acid chain; its full sequence is Phosphomevalonate dehydratase small subunit (133 aa).

The active-site Proton acceptor is Ser-62.

Belongs to the AcnX type II small subunit family. Heterodimer composed of a large subunit (PMDh-L) and a small subunit (PMDh-S).

It catalyses the reaction (R)-5-phosphomevalonate = (2E)-3-methyl-5-phosphooxypent-2-enoate + H2O. It functions in the pathway isoprenoid biosynthesis; isopentenyl diphosphate biosynthesis via mevalonate pathway. Its function is as follows. Component of a hydro-lyase that catalyzes the dehydration of mevalonate 5-phosphate (MVA5P) to form trans-anhydromevalonate 5-phosphate (tAHMP). Involved in the archaeal mevalonate (MVA) pathway, which provides fundamental precursors for isoprenoid biosynthesis, such as isopentenyl diphosphate (IPP) and dimethylallyl diphosphate (DMAPP). The sequence is that of Phosphomevalonate dehydratase small subunit from Thermococcus kodakarensis (strain ATCC BAA-918 / JCM 12380 / KOD1) (Pyrococcus kodakaraensis (strain KOD1)).